A 184-amino-acid polypeptide reads, in one-letter code: MANEQNEQAQDIQNEQVEQSNEQTQAEGVEQANDVTVESLQAQITKLEENLKLEKARTANAVYEAQKSVERIQRESEKHKETVLEKFAKELLDSVDNLERAIQAAGDEETPVLEGVKLTLKSLLTTLEKFGVVEADTQNGFNADLHQAVGIDPNAKANEIGTVLQKGYTLNGRLLRPAMVMVGQ.

Residues 1–26 (MANEQNEQAQDIQNEQVEQSNEQTQA) are compositionally biased toward polar residues. The segment at 1–34 (MANEQNEQAQDIQNEQVEQSNEQTQAEGVEQAND) is disordered.

It belongs to the GrpE family. As to quaternary structure, homodimer.

It localises to the cytoplasm. In terms of biological role, participates actively in the response to hyperosmotic and heat shock by preventing the aggregation of stress-denatured proteins, in association with DnaK and GrpE. It is the nucleotide exchange factor for DnaK and may function as a thermosensor. Unfolded proteins bind initially to DnaJ; upon interaction with the DnaJ-bound protein, DnaK hydrolyzes its bound ATP, resulting in the formation of a stable complex. GrpE releases ADP from DnaK; ATP binding to DnaK triggers the release of the substrate protein, thus completing the reaction cycle. Several rounds of ATP-dependent interactions between DnaJ, DnaK and GrpE are required for fully efficient folding. The chain is Protein GrpE from Acinetobacter baumannii (strain AB307-0294).